The following is a 331-amino-acid chain: Centriolar satellite-associated tubulin polyglutamylase complex regulator 1 (331 aa).

Residues 1 to 111 (MLSPERLALP…HCLLQLLCPD (111 aa)) are required for interaction with PCM1. Positions 1-225 (MLSPERLALP…SCPPPALVKE (225 aa)) are required for interaction with TPGS1, LRRC49, and TTLL1. The interval 112–331 (FPLELTQKAA…STEETDESET (220 aa)) is required for interaction with TPGS2. The tract at residues 288-331 (SPEASCLPSRTPPRVGSPWRPLHHSRKVDGESDGSTEETDESET) is disordered. Acidic residues predominate over residues 318–331 (ESDGSTEETDESET). Serine 319 carries the phosphoserine modification.

Belongs to the CSTPP1 family. As to quaternary structure, interacts with PCM1. Interacts with TTLL1, TPGS1, TPGS2 and LRRC49; the interactions link CSTPP1 to the complex TPGC. Binds to alpha-tubulin.

It localises to the cytoplasm. Its subcellular location is the cytoskeleton. The protein resides in the microtubule organizing center. The protein localises to the centrosome. It is found in the centriolar satellite. In terms of biological role, regulator of the tubulin polyglutamylase complex (TPGC) that controls cytoskeletal organization, nuclear shape, and cilium disassembly by balancing microtubule and actin assembly. Regulates the assembly and stability of the TPGC and thereby modulates polyglutamylation of the microtubule, which antagonizes MAP4 binding. This chain is Centriolar satellite-associated tubulin polyglutamylase complex regulator 1, found in Homo sapiens (Human).